The chain runs to 207 residues: MEPTAAPHPHLYLASQSPRRQELLRQIGVRFELLLADGDEDAEALEAVLLGETPDDYVQRVCALKAQAAARRRAARGLPARPILTSDTTVCLGGEILGKPADAADAHRMLRGMSGREHRVLTAVTVVTADGTPMHALSVSQVRFAVLTDVDIARYIASGEPFGKAGAYGIQGRAAAFVAHISGSYSGIMGLPLFETAALLAQAAITL.

Asp87 serves as the catalytic Proton acceptor.

It belongs to the Maf family. YhdE subfamily. Requires a divalent metal cation as cofactor.

The protein localises to the cytoplasm. The enzyme catalyses dTTP + H2O = dTMP + diphosphate + H(+). The catalysed reaction is UTP + H2O = UMP + diphosphate + H(+). Functionally, nucleoside triphosphate pyrophosphatase that hydrolyzes dTTP and UTP. May have a dual role in cell division arrest and in preventing the incorporation of modified nucleotides into cellular nucleic acids. The sequence is that of dTTP/UTP pyrophosphatase from Ralstonia nicotianae (strain ATCC BAA-1114 / GMI1000) (Ralstonia solanacearum).